Reading from the N-terminus, the 273-residue chain is Dermonecrotic toxin LarSicTox-alphaIB1aii (273 aa).

Residue His-5 is part of the active site. Residues Glu-25 and Asp-27 each contribute to the Mg(2+) site. His-41 acts as the Nucleophile in catalysis. 2 disulfides stabilise this stretch: Cys-45-Cys-51 and Cys-47-Cys-190. A Mg(2+)-binding site is contributed by Asp-85. The N-linked (GlcNAc...) asparagine glycan is linked to Asn-250.

This sequence belongs to the arthropod phospholipase D family. Class II subfamily. The cofactor is Mg(2+). As to expression, expressed by the venom gland.

Its subcellular location is the secreted. It carries out the reaction an N-(acyl)-sphingosylphosphocholine = an N-(acyl)-sphingosyl-1,3-cyclic phosphate + choline. It catalyses the reaction an N-(acyl)-sphingosylphosphoethanolamine = an N-(acyl)-sphingosyl-1,3-cyclic phosphate + ethanolamine. The catalysed reaction is a 1-acyl-sn-glycero-3-phosphocholine = a 1-acyl-sn-glycero-2,3-cyclic phosphate + choline. The enzyme catalyses a 1-acyl-sn-glycero-3-phosphoethanolamine = a 1-acyl-sn-glycero-2,3-cyclic phosphate + ethanolamine. Dermonecrotic toxins cleave the phosphodiester linkage between the phosphate and headgroup of certain phospholipids (sphingolipid and lysolipid substrates), forming an alcohol (often choline) and a cyclic phosphate. This toxin acts on sphingomyelin (SM). It may also act on ceramide phosphoethanolamine (CPE), lysophosphatidylcholine (LPC) and lysophosphatidylethanolamine (LPE), but not on lysophosphatidylserine (LPS), and lysophosphatidylglycerol (LPG). It acts by transphosphatidylation, releasing exclusively cyclic phosphate products as second products. Induces dermonecrosis, hemolysis, increased vascular permeability, edema, inflammatory response, and platelet aggregation. The protein is Dermonecrotic toxin LarSicTox-alphaIB1aii of Loxosceles arizonica (Arizona brown spider).